Here is a 732-residue protein sequence, read N- to C-terminus: Elongation factor 2 (732 aa).

One can recognise a tr-type G domain in the interval 19-230 (ERIRNMGIAA…VSFKDIVELT (212 aa)). Residues 28–35 (AHIDHGKT), 94–98 (DTPGH), and 148–151 (NKVD) contribute to the GTP site. Diphthamide is present on histidine 597.

This sequence belongs to the TRAFAC class translation factor GTPase superfamily. Classic translation factor GTPase family. EF-G/EF-2 subfamily.

The protein localises to the cytoplasm. Catalyzes the GTP-dependent ribosomal translocation step during translation elongation. During this step, the ribosome changes from the pre-translocational (PRE) to the post-translocational (POST) state as the newly formed A-site-bound peptidyl-tRNA and P-site-bound deacylated tRNA move to the P and E sites, respectively. Catalyzes the coordinated movement of the two tRNA molecules, the mRNA and conformational changes in the ribosome. This chain is Elongation factor 2, found in Thermococcus gammatolerans (strain DSM 15229 / JCM 11827 / EJ3).